Here is a 628-residue protein sequence, read N- to C-terminus: MVAFSALSGVSALSLLLCLVQHAHGVSLKVSTQGGNSSSPILYGFMFEDINHSGDGGIYGQLLQNPGLQGTTPNLTAWAAVGDATIAIDGDSPLTSAIPSTIKLDVADDATGAVGLTNEGYWGIPVDGSEFQSSFWIKGDYSGDITVRLVGNYTGTEYGSATITHTSTADNFTQASVKFPTTKAPDGNVLYELTVDGSVAAGSSLNFGYLTLFGETYKSRENGLKPQLANVLADMKGSFLRFPGGNNLEGNSAENRWKWNETIGDLWDRPGREGTWTYYNTDGLGLHEYFYWCEDLGLVPVLGVWDGFALESGGNTPITGDALTPYIDDVLNELEYILGDTSTTYGAWRAANGQEEPWNLTMVEIGNEDMLGGGCESYAERFTAFYDAIHAAYPDLILIASTSEADCLPESMPEGSWVDYHDYSTPDGLVGQFNYFDNLDRSVPYFIGEYSRWEIDWPNMKGSVSEAVFMIGFERNSDVVKMAAYAPLLQLVNSTQWTPDLIGYTQSPDDIFLSTSYYVQEMFSRNRGDTIKEVTSDSDFGPLYWVASSAGDSYYVKLANYGSETQDLTVSIPGTSTGKLTVLADNDPDAYNSDTQTLVTPSESTVQASNGTFTFSLPAWAVAVLAAN.

Residues 1–25 (MVAFSALSGVSALSLLLCLVQHAHG) form the signal peptide. Residues N36, N51, N74, N152, N171, N260, N359, and N493 are each glycosylated (N-linked (GlcNAc...) asparagine).

The protein belongs to the glycosyl hydrolase 51 family.

It localises to the secreted. The enzyme catalyses Hydrolysis of terminal non-reducing alpha-L-arabinofuranoside residues in alpha-L-arabinosides.. It functions in the pathway glycan metabolism; L-arabinan degradation. Alpha-L-arabinofuranosidase involved in the degradation of arabinoxylan, a major component of plant hemicellulose. Acts only on small linear 1,5-alpha-linked L-arabinofuranosyl oligosaccharides. The chain is Alpha-L-arabinofuranosidase A (abfA) from Aspergillus kawachii (strain NBRC 4308) (White koji mold).